The chain runs to 647 residues: Threonine--tRNA ligase (647 aa).

Residues 1-61 enclose the TGS domain; sequence MINITFPDGA…TEDGSIEIVT (61 aa). The tract at residues 242-540 is catalytic; that stretch reads DHRKLGKELD…LIENYKGAFP (299 aa). Residues Cys336, His387, and His517 each coordinate Zn(2+).

This sequence belongs to the class-II aminoacyl-tRNA synthetase family. Homodimer. Requires Zn(2+) as cofactor.

The protein localises to the cytoplasm. The enzyme catalyses tRNA(Thr) + L-threonine + ATP = L-threonyl-tRNA(Thr) + AMP + diphosphate + H(+). In terms of biological role, catalyzes the attachment of threonine to tRNA(Thr) in a two-step reaction: L-threonine is first activated by ATP to form Thr-AMP and then transferred to the acceptor end of tRNA(Thr). Also edits incorrectly charged L-seryl-tRNA(Thr). This is Threonine--tRNA ligase from Streptococcus pneumoniae (strain P1031).